Here is a 310-residue protein sequence, read N- to C-terminus: Probable cell division protein WhiA (310 aa).

The segment at residues 277-310 (SLKELAEQVPDGPISKSGVNHRLKKLHEIAENLR) is a DNA-binding region (H-T-H motif).

This sequence belongs to the WhiA family.

Involved in cell division and chromosome segregation. The chain is Probable cell division protein WhiA from Lactobacillus delbrueckii subsp. bulgaricus (strain ATCC BAA-365 / Lb-18).